The following is a 244-amino-acid chain: Cysteine-rich secretory protein 2 (244 aa).

The N-terminal stretch at Met-1 to Asn-21 is a signal peptide. Residues Asn-43–Tyr-170 form the SCP domain. 5 cysteine pairs are disulfide-bonded: Cys-190/Cys-197, Cys-193/Cys-202, Cys-206/Cys-239, Cys-215/Cys-233, and Cys-224/Cys-237. In terms of domain architecture, ShKT spans Cys-206–Cys-239.

The protein belongs to the CRISP family. Interacts with NSUN4 isoform 3. In terms of tissue distribution, testis.

It is found in the secreted. May regulate some ion channels' activity and thereby regulate calcium fluxes during sperm capacitation. The sequence is that of Cysteine-rich secretory protein 2 (CRISP2) from Cavia porcellus (Guinea pig).